An 829-amino-acid polypeptide reads, in one-letter code: Probable beta-glucosidase H (829 aa).

Asparagine 13 is a glycosylation site (N-linked (GlcNAc...) asparagine). Residue aspartate 225 is part of the active site. Residues asparagine 304, asparagine 473, asparagine 602, asparagine 627, asparagine 664, and asparagine 749 are each glycosylated (N-linked (GlcNAc...) asparagine). A PA14 domain is found at arginine 389–valine 548.

It belongs to the glycosyl hydrolase 3 family.

Its subcellular location is the secreted. It catalyses the reaction Hydrolysis of terminal, non-reducing beta-D-glucosyl residues with release of beta-D-glucose.. Its pathway is glycan metabolism; cellulose degradation. Functionally, beta-glucosidases are one of a number of cellulolytic enzymes involved in the degradation of cellulosic biomass. Catalyzes the last step releasing glucose from the inhibitory cellobiose. The sequence is that of Probable beta-glucosidase H (bglH) from Aspergillus fumigatus (strain CBS 144.89 / FGSC A1163 / CEA10) (Neosartorya fumigata).